The sequence spans 417 residues: Phosphoglycerate kinase 1 (417 aa).

The residue at position 2 (S2) is an N-acetylserine. Phosphoserine is present on residues S2 and S4. Position 6 is an N6-succinyllysine (K6). The residue at position 11 (K11) is an N6-acetyllysine. Residues V23, D24, F25, N26, Q38, and R39 each contribute to the (2R)-3-phosphoglycerate site. Residues 38-43 (QRIKAA) are mitochondrial targeting region exposed following cis-trans isomerization by PIN1 and recognized by the TOM complex for mitochondrial translocation of the protein. K48 is modified (N6-acetyllysine; alternate). Position 48 is an N6-succinyllysine; alternate (K48). Positions 62, 63, 65, and 66 each coordinate (2R)-3-phosphoglycerate. The residue at position 75 (K75) is an N6-acetyllysine. Y76 carries the post-translational modification Phosphotyrosine. N6-acetyllysine occurs at positions 86 and 91. K97 carries the N6-acetyllysine; alternate modification. K97 is modified (N6-(2-hydroxyisobutyryl)lysine; alternate). (2R)-3-phosphoglycerate is bound by residues L122 and R123. K131 carries the N6-acetyllysine; alternate modification. N6-malonyllysine; alternate is present on K131. K146 is subject to N6-acetyllysine. Residues H170 and R171 each contribute to the (2R)-3-phosphoglycerate site. K191 carries the N6-succinyllysine modification. Phosphotyrosine is present on Y196. K199 is modified (N6-acetyllysine). Residue S203 is modified to Phosphoserine. G214 is a binding site for ADP. Residue G214 participates in CDP binding. AMP-binding residues include A215 and K216. A215 serves as a coordination point for ATP. A215 lines the Mg(2+) pocket. The residue at position 216 (K216) is an N6-(2-hydroxyisobutyryl)lysine. A218 and D219 together coordinate Mg(2+). Position 219 (D219) interacts with CDP. Residue K220 participates in AMP binding. Residue K220 participates in ATP binding. At K220 the chain carries N6-(2-hydroxyisobutyryl)lysine. Residue G238 participates in ADP binding. Residue G238 coordinates CDP. G239 lines the AMP pocket. An ATP-binding site is contributed by G239. N6-acetyllysine is present on residues K267 and K291. An AMP-binding site is contributed by G313. An ATP-binding site is contributed by G313. An N6-(2-hydroxyisobutyryl)lysine modification is found at K323. G338, V340, and F343 together coordinate CDP. An ADP-binding site is contributed by F343. AMP is bound at residue E344. Residue E344 coordinates ATP. At K361 the chain carries N6-acetyllysine. Residues D375 and T376 each coordinate ATP. A Mg(2+)-binding site is contributed by D375.

Belongs to the phosphoglycerate kinase family. Monomer. Interacts with kinase MAPK1/ERK2; the interaction is direct, occurs under hypoxic conditions, and promotes its interaction with PIN1. Interacts with peptidyl-prolyl cis-trans isomerase PIN1; the interaction is direct, occurs under hypoxic conditions, and targets the protein to the mitochondrion by promoting interactions with the TOM complex. Interacts with mitochondrial circRNA mcPGK1 (via its 2nd stem-loop); the interaction is direct and targets the protein to the mitochondrion by promoting interactions with the TOM complex. Interacts with pyruvate dehydrogenase kinase PDK1; the interaction is direct, occurs under hypoxic conditions and leads to PDK1-mediated inhibition of pyruvate dehydrogenase complex activity. The cofactor is Mg(2+). Phosphorylated at Ser-203 by MAPK1/ERK2 under hypoxic conditions, which promotes its mitochondrial targeting.

The protein resides in the cytoplasm. It localises to the cytosol. It is found in the mitochondrion matrix. The catalysed reaction is (2R)-3-phosphoglycerate + ATP = (2R)-3-phospho-glyceroyl phosphate + ADP. It carries out the reaction L-seryl-[protein] + ATP = O-phospho-L-seryl-[protein] + ADP + H(+). The protein operates within carbohydrate degradation; glycolysis; pyruvate from D-glyceraldehyde 3-phosphate: step 2/5. Functionally, catalyzes one of the two ATP producing reactions in the glycolytic pathway via the reversible conversion of 1,3-diphosphoglycerate to 3-phosphoglycerate. Both L- and D- forms of purine and pyrimidine nucleotides can be used as substrates, but the activity is much lower on pyrimidines. In addition to its role as a glycolytic enzyme, it seems that PGK-1 acts as a polymerase alpha cofactor protein (primer recognition protein). Acts as a protein kinase when localized to the mitochondrion where it phosphorylates pyruvate dehydrogenase kinase PDK1 to inhibit pyruvate dehydrogenase complex activity and suppress the formation of acetyl-coenzyme A from pyruvate, and consequently inhibit oxidative phosphorylation and promote glycolysis. May play a role in sperm motility. In Sus scrofa (Pig), this protein is Phosphoglycerate kinase 1 (PGK1).